We begin with the raw amino-acid sequence, 525 residues long: GMP synthase [glutamine-hydrolyzing] (525 aa).

One can recognise a Glutamine amidotransferase type-1 domain in the interval R9–L207. The Nucleophile role is filled by C86. Residues H181 and E183 contribute to the active site. The region spanning W208–R400 is the GMPS ATP-PPase domain. S235–S241 contacts ATP.

Homodimer.

It catalyses the reaction XMP + L-glutamine + ATP + H2O = GMP + L-glutamate + AMP + diphosphate + 2 H(+). It participates in purine metabolism; GMP biosynthesis; GMP from XMP (L-Gln route): step 1/1. Its function is as follows. Catalyzes the synthesis of GMP from XMP. This is GMP synthase [glutamine-hydrolyzing] from Yersinia pseudotuberculosis serotype IB (strain PB1/+).